Reading from the N-terminus, the 158-residue chain is E3 ubiquitin ligase complex SCF subunit sconC (158 aa).

The segment at 100-158 (ILAANYLDIKALLDVGCKTVANMIKGKSPEEIRKTFNIQNDFTPEEEDQIRRENEWAEE) is interaction with the F-box domain of F-box proteins.

Belongs to the SKP1 family. As to quaternary structure, component of the SCF (SKP1-CUL1-F-box protein) E3 ubiquitin ligase complexes.

It functions in the pathway protein modification; protein ubiquitination. In terms of biological role, essential component of the SCF (SKP1-CUL1-F-box protein) E3 ubiquitin ligase complexes, which mediate the ubiquitination and subsequent proteasomal degradation of target proteins. Controls sulfur metabolite repression, probably by mediating the inactivation or degradation of the metR transcription factor. The chain is E3 ubiquitin ligase complex SCF subunit sconC (sconC) from Aspergillus fumigatus (strain CBS 144.89 / FGSC A1163 / CEA10) (Neosartorya fumigata).